The sequence spans 444 residues: 3-phosphoshikimate 1-carboxyvinyltransferase (444 aa).

3 residues coordinate 3-phosphoshikimate: Lys-29, Ser-30, and Arg-34. Lys-29 serves as a coordination point for phosphoenolpyruvate. Positions 103 and 132 each coordinate phosphoenolpyruvate. Residues Ser-177, Gln-179, Asp-329, and Lys-356 each coordinate 3-phosphoshikimate. A phosphoenolpyruvate-binding site is contributed by Gln-179. The Proton acceptor role is filled by Asp-329. Phosphoenolpyruvate is bound by residues Arg-360 and Arg-402.

The protein belongs to the EPSP synthase family. Monomer.

Its subcellular location is the cytoplasm. It catalyses the reaction 3-phosphoshikimate + phosphoenolpyruvate = 5-O-(1-carboxyvinyl)-3-phosphoshikimate + phosphate. The protein operates within metabolic intermediate biosynthesis; chorismate biosynthesis; chorismate from D-erythrose 4-phosphate and phosphoenolpyruvate: step 6/7. Its function is as follows. Catalyzes the transfer of the enolpyruvyl moiety of phosphoenolpyruvate (PEP) to the 5-hydroxyl of shikimate-3-phosphate (S3P) to produce enolpyruvyl shikimate-3-phosphate and inorganic phosphate. The sequence is that of 3-phosphoshikimate 1-carboxyvinyltransferase from Prochlorococcus marinus (strain NATL2A).